The chain runs to 46 residues: Myoregulin (46 aa).

At 1 to 21 (MSGKSWVLISTTSPQSLEDEI) the chain is on the cytoplasmic side. Residues 22–42 (LGRLLKILFVLFVDLMSIMYV) form a helical membrane-spanning segment. The Lumenal segment spans residues 43–46 (VITS).

Homooligomer. Monomer. Interacts with ATP2A1/SERCA1. Interacts as a monomer with ATP2A2/SERCA2; the interaction inhibits ATP2A2 activity. Specifically expressed in all skeletal muscles. Detected in both fast- and slow-type skeletal muscle. Not expressed in cardiac or smooth muscles.

It localises to the sarcoplasmic reticulum membrane. Functionally, inhibits the activity of ATP2A1/SERCA1 ATPase in sarcoplasmic reticulum by decreasing the apparent affinity of the ATPase for Ca(2+), thereby acting as a key regulator of skeletal muscle activity. Its high expression in adult skeletal muscle, suggests that it constitutes the predominant regulator of ATP2A1/SERCA1 in adult skeletal muscle. Also inhibits the activity of ATP2A2/SERCA2 and ATP2A3/SERCA3. This is Myoregulin from Mus musculus (Mouse).